Here is a 199-residue protein sequence, read N- to C-terminus: Fe/S biogenesis protein NfuA (199 aa).

Positions 156 and 159 each coordinate [4Fe-4S] cluster.

It belongs to the NfuA family. In terms of assembly, homodimer. Requires [4Fe-4S] cluster as cofactor.

Its function is as follows. Involved in iron-sulfur cluster biogenesis. Binds a 4Fe-4S cluster, can transfer this cluster to apoproteins, and thereby intervenes in the maturation of Fe/S proteins. Could also act as a scaffold/chaperone for damaged Fe/S proteins. The protein is Fe/S biogenesis protein NfuA of Haemophilus ducreyi (strain 35000HP / ATCC 700724).